The chain runs to 96 residues: Gastrolith matrix protein (96 aa).

9 repeat units span residues 11-15 (GSAGF), 16-20 (GSTNF), 21-25 (GSSGF), 30-34 (GSTGF), 35-39 (GSAGF), 50-54 (GSAAF), 55-59 (GSSSF), 65-69 (GSTGF), and 70-74 (GSSSF). The tract at residues 11–74 (GSAGFGSTNF…GSTGFGSSSF (64 aa)) is 9 X 5 AA tandem repeat of G-S-X-X-F. Residues 75–96 (GSTSGLPYLVVIPNNPAVGGLR) are disordered.

Post-translationally, the N-terminus is blocked. As to expression, expressed in the gastroliths.

The protein localises to the secreted. In terms of biological role, associates with chitin and plays a role in calcification. This chain is Gastrolith matrix protein, found in Procambarus clarkii (Red swamp crayfish).